A 372-amino-acid chain; its full sequence is Cyclin-J (372 aa).

The region spanning 15-143 (DIHQALRYKE…LLETFQWNLC (129 aa)) is the Cyclin N-terminal domain.

It belongs to the cyclin family.

This chain is Cyclin-J (CCNJ), found in Homo sapiens (Human).